Here is a 374-residue protein sequence, read N- to C-terminus: MILNKVAKCYGKQIGFFGNKTTQFIKPNQTIFLIGGTKRLFTTQQQQSPKKEEPKSEQQKKVEDKTEEKEKEKDEEENENEKEKENEDGEGQKKKSKFNVPPIVTSVTSTFFAGVLVASTFGYLTYNFKKDISEEERYRLNSVESKFYHSIAEPFREFFDNIFENLRTKYEFFDMLFGPGKIHKVLPPPLPGGKKYTLVIDIDALTEITKTSKYPTLYKRAGLDFFLDHLRKDYEIYLYFNGNIPQNKYEQLQFKIDTNGKYFTGLLYPETGIKERNQFSKKIEMLDRDPSKVIFIDAASPYDHPNVINIGKFKSNSKDKLLIELLPVLESFSRKNLDDVRPEISQFQNISKQSLTKNLEDYLSTHNINSRQKK.

Residues 1–48 (MILNKVAKCYGKQIGFFGNKTTQFIKPNQTIFLIGGTKRLFTTQQQQS) constitute a mitochondrion transit peptide. The interval 42-97 (TTQQQQSPKKEEPKSEQQKKVEDKTEEKEKEKDEEENENEKEKENEDGEGQKKKSK) is disordered. 2 stretches are compositionally biased toward basic and acidic residues: residues 49 to 72 (PKKE…KEKE) and 81 to 93 (EKEK…EGQK). The chain crosses the membrane as a helical span at residues 103 to 125 (IVTSVTSTFFAGVLVASTFGYLT). The FCP1 homology domain occupies 191–332 (PGGKKYTLVI…IELLPVLESF (142 aa)).

This sequence belongs to the TIM50 family. Component of the mitochondrial import inner membrane translocase complex.

It is found in the mitochondrion inner membrane. Functionally, component of the mitochondrial import inner membrane translocase that mediates the translocation of transit peptide-containing proteins across the mitochondrial inner membrane. This Dictyostelium discoideum (Social amoeba) protein is Mitochondrial import inner membrane translocase subunit tim50 (timm50).